The following is a 457-amino-acid chain: Cysteine--tRNA ligase (457 aa).

Residue Cys-31 coordinates Zn(2+). The 'HIGH' region signature appears at 33–43; sequence PTVYNYAHIGN. Zn(2+)-binding residues include Cys-211, His-236, and Glu-240. The short motif at 269–273 is the 'KMSKS' region element; that stretch reads KMSKS. Residue Lys-272 participates in ATP binding.

It belongs to the class-I aminoacyl-tRNA synthetase family. As to quaternary structure, monomer. It depends on Zn(2+) as a cofactor.

It localises to the cytoplasm. The catalysed reaction is tRNA(Cys) + L-cysteine + ATP = L-cysteinyl-tRNA(Cys) + AMP + diphosphate. The chain is Cysteine--tRNA ligase from Xanthomonas campestris pv. campestris (strain ATCC 33913 / DSM 3586 / NCPPB 528 / LMG 568 / P 25).